We begin with the raw amino-acid sequence, 292 residues long: 4-hydroxy-tetrahydrodipicolinate synthase (292 aa).

T45 serves as a coordination point for pyruvate. The active-site Proton donor/acceptor is Y133. K161 acts as the Schiff-base intermediate with substrate in catalysis. I203 serves as a coordination point for pyruvate.

The protein belongs to the DapA family. In terms of assembly, homodimer.

The protein localises to the cytoplasm. It carries out the reaction L-aspartate 4-semialdehyde + pyruvate = (2S,4S)-4-hydroxy-2,3,4,5-tetrahydrodipicolinate + H2O + H(+). The protein operates within amino-acid biosynthesis; L-lysine biosynthesis via DAP pathway; (S)-tetrahydrodipicolinate from L-aspartate: step 3/4. Its function is as follows. Catalyzes the condensation of (S)-aspartate-beta-semialdehyde [(S)-ASA] and pyruvate to 4-hydroxy-tetrahydrodipicolinate (HTPA). The polypeptide is 4-hydroxy-tetrahydrodipicolinate synthase (Pseudomonas syringae pv. syringae (strain B728a)).